Consider the following 1171-residue polypeptide: MEIVNNQNQCVPYNCLNNPENEILDIERSNSTVATNIALEISRLLASATPIGGILLGLFDAIWGSIGPSQWDLFLEQIELLIDQKIEEFARNQAISRLEGISSLYGIYTEAFREWEADPTNPALKEEMRTQFNDMNSILVTAIPLFSVQNYQVPFLSVYVQAANLHLSVLRDVSVFGQAWGFDIATINSRYNDLTRLIPIYTDYAVRWYNTGLDRLPRTGGLRNWARFNQFRRELTISVLDIISFFRNYDSRLYPIPTSSQLTREVYTDPVINITDYRVGPSFENIENSAIRSPHLMDFLNNLTIDTDLIRGVHYWAGHRVTSHFTGSSQVITTPQYGITANAEPRRTIAPSTFPGLNLFYRTLSNPFFRRSENITPTLGINVVQGVGFIQPNNAEVLYRSRGTVDSLNELPIDGENSLVGYSHRLSHVTLTRSLYNTNITSLPTFVWTHHSATNTNTINPDIITQIPLVKGFRLGGGTSVIKGPGFTGGDILRRNTIGEFVSLQVNINSPITQRYRLRFRYASSRDARITVAIGGQIRVDMTLEKTMEIGESLTSRTFSYTNFSNPFSFRANPDIIRIAEELPIRGGELYIDKIELILADATFEEEYDLERAQKAVNALFTSTNQLGLKTDVTDYHIDQVSNLVECLSDEFCLDEKRELSEKVKHAKRLSDERNLLQDPNFRGINRQPDRGWRGSTDITIQGGDDVFKENYVTLPGTFDECYPTYLYQKIDESKLKAYTRYELRGYIEDSQDLEIYLIRYNAKHETVNVPGTGSLWPLSAQSPIGKCGEPNRCAPHLEWNPNLDCSCRDGEKCAHHSHHFSLDIDVGCTDLNEDLGVWVIFKIKTQDGYARLGNLEFLEENPLLGEALARVKRAEKKWRDKCEKLEWETNIVYKEAKESVDALFVNSQYDRLQADTNIAMIHAADKRVHSIREAYLPELSVIPGVNAAIFEELEGRIFTAFSLYDARNVIKNGDFNNGLSCWNVKGHVDVEEQNNHRSVLVVPEWEAEVSQEVRVCPGRGYILRVTAYKEGYGEGCVTIHEIEDNTDELKFSNCVEEEVYPNNTVTCNNYTATQEEHEGTYTSRNRGYDEAYESNSSVHASVYEEKSYTDRRRENPCESNRGYGDYTPLPAGYVTKELEYFPETDKVWIEIGETEGTFIVDSVELLLMEE.

Residues 1094–1124 form a disordered region; it reads ESNSSVHASVYEEKSYTDRRRENPCESNRGY. The segment covering 1103–1117 has biased composition (basic and acidic residues); that stretch reads VYEEKSYTDRRRENP.

The protein belongs to the delta endotoxin family.

Promotes colloidosmotic lysis by binding to the midgut epithelial cells of many lepidopteran larvae including Spodoptera species. This Bacillus thuringiensis subsp. kenyae protein is Pesticidal crystal protein Cry1Ea (cry1Ea).